The primary structure comprises 229 residues: tRNA pseudouridine synthase B (229 aa).

Asp42 (nucleophile) is an active-site residue.

It belongs to the pseudouridine synthase TruB family. Type 1 subfamily.

It carries out the reaction uridine(55) in tRNA = pseudouridine(55) in tRNA. In terms of biological role, responsible for synthesis of pseudouridine from uracil-55 in the psi GC loop of transfer RNAs. This chain is tRNA pseudouridine synthase B, found in Ureaplasma urealyticum serovar 10 (strain ATCC 33699 / Western).